A 325-amino-acid chain; its full sequence is RepFIB replication protein A (325 aa).

Positions 279–298 (APNDESKENPLPPSPAEKVS) are disordered.

Belongs to the initiator RepB protein family.

In terms of biological role, this protein is essential for plasmid replication; it is involved in copy control functions. In vitro, binds to the DNA repeat units, BCDD'D'', EFG and HIJ. The protein is RepFIB replication protein A (repB) of Escherichia coli (strain K12).